The following is a 161-amino-acid chain: uncharacterized protein (161 aa).

Residues 30–50 (GVILFRLLGVILFRLLGVILF) form a helical membrane-spanning segment.

It localises to the membrane. This is an uncharacterized protein from Homo sapiens (Human).